A 191-amino-acid polypeptide reads, in one-letter code: Neuronal calcium sensor 1 (191 aa).

A lipid anchor (N-myristoyl glycine) is attached at glycine 2. EF-hand domains are found at residues 24–59 (ESEI…FPFG), 60–95 (DPSK…TSRG), 96–131 (TVEE…IYRM), and 144–179 (TPEK…DPTI). 14 residues coordinate Ca(2+): aspartate 73, asparagine 75, aspartate 77, glutamate 84, aspartate 109, aspartate 111, aspartate 113, tyrosine 115, glutamate 120, aspartate 157, asparagine 159, aspartate 161, glutamine 163, and glutamate 168.

The protein belongs to the recoverin family.

The protein localises to the perikaryon. It is found in the cell projection. It localises to the growth cone. Neuronal calcium sensor, regulator of G protein-coupled receptor phosphorylation in a calcium dependent manner. Regulates neurite extension and branching by activity-dependent Ca(2+) influx in growth cones. This Lymnaea stagnalis (Great pond snail) protein is Neuronal calcium sensor 1.